Consider the following 253-residue polypeptide: Tetraspanin-11 (253 aa).

Transmembrane regions (helical) follow at residues 19 to 39 (LLFI…AVGV), 63 to 83 (ILIF…GAVI), 90 to 110 (LSAY…AGVL), and 220 to 240 (LLLM…GMIL).

The protein belongs to the tetraspanin (TM4SF) family.

It is found in the membrane. The sequence is that of Tetraspanin-11 (TSPAN11) from Bos taurus (Bovine).